A 353-amino-acid chain; its full sequence is Photosystem II protein D1 (353 aa).

Threonine 2 is subject to N-acetylthreonine. Phosphothreonine is present on threonine 2. The next 3 membrane-spanning stretches (helical) occupy residues 29 to 46 (YIGW…TAIS), 118 to 133 (HFLL…EWEL), and 142 to 156 (WIAV…AATA). A chlorophyll a-binding site is contributed by histidine 118. Tyrosine 126 is a binding site for pheophytin a. Positions 170 and 189 each coordinate [CaMn4O5] cluster. The chain crosses the membrane as a helical span at residues 197 to 218 (FHMLGVAGVFGGSLFSAMHGSL). Histidine 198 serves as a coordination point for chlorophyll a. Residues histidine 215 and 264 to 265 (SF) contribute to the a quinone site. Residue histidine 215 participates in Fe cation binding. Histidine 272 is a binding site for Fe cation. The chain crosses the membrane as a helical span at residues 274–288 (FLAVWPVVGIWFTAM). 4 residues coordinate [CaMn4O5] cluster: histidine 332, glutamate 333, aspartate 342, and alanine 344. Residues 345-353 (SVEAPAVNG) constitute a propeptide that is removed on maturation.

This sequence belongs to the reaction center PufL/M/PsbA/D family. In terms of assembly, PSII is composed of 1 copy each of membrane proteins PsbA, PsbB, PsbC, PsbD, PsbE, PsbF, PsbH, PsbI, PsbJ, PsbK, PsbL, PsbM, PsbT, PsbX, PsbY, PsbZ, Psb30/Ycf12, at least 3 peripheral proteins of the oxygen-evolving complex and a large number of cofactors. It forms dimeric complexes. Requires The D1/D2 heterodimer binds P680, chlorophylls that are the primary electron donor of PSII, and subsequent electron acceptors. It shares a non-heme iron and each subunit binds pheophytin, quinone, additional chlorophylls, carotenoids and lipids. D1 provides most of the ligands for the Mn4-Ca-O5 cluster of the oxygen-evolving complex (OEC). There is also a Cl(-1) ion associated with D1 and D2, which is required for oxygen evolution. The PSII complex binds additional chlorophylls, carotenoids and specific lipids. as cofactor. In terms of processing, tyr-161 forms a radical intermediate that is referred to as redox-active TyrZ, YZ or Y-Z. Post-translationally, C-terminally processed by CTPA; processing is essential to allow assembly of the oxygen-evolving complex and thus photosynthetic growth.

The protein resides in the plastid. Its subcellular location is the chloroplast thylakoid membrane. The enzyme catalyses 2 a plastoquinone + 4 hnu + 2 H2O = 2 a plastoquinol + O2. Its function is as follows. Photosystem II (PSII) is a light-driven water:plastoquinone oxidoreductase that uses light energy to abstract electrons from H(2)O, generating O(2) and a proton gradient subsequently used for ATP formation. It consists of a core antenna complex that captures photons, and an electron transfer chain that converts photonic excitation into a charge separation. The D1/D2 (PsbA/PsbD) reaction center heterodimer binds P680, the primary electron donor of PSII as well as several subsequent electron acceptors. This is Photosystem II protein D1 from Mesostigma viride (Green alga).